The chain runs to 100 residues: Large ribosomal subunit protein uL23c (100 aa).

The protein belongs to the universal ribosomal protein uL23 family. In terms of assembly, part of the 50S ribosomal subunit.

Its subcellular location is the plastid. The protein localises to the chloroplast. Functionally, binds to 23S rRNA. The protein is Large ribosomal subunit protein uL23c (rpl23) of Euglena gracilis.